The chain runs to 403 residues: 3-(3-hydroxy-phenyl)propionate transporter (403 aa).

The Cytoplasmic portion of the chain corresponds to 1-16 (MSTRTPSSSSSRLMLT). The helical transmembrane segment at 17–37 (IGLCFLVALMEGLDLQAAGIA) threads the bilayer. Over 38–53 (AGGIAQAFALDKMQMG) the chain is Periplasmic. The chain crosses the membrane as a helical span at residues 54–74 (WIFSAGILGLLPGALVGGMLA). The Cytoplasmic segment spans residues 75-81 (DRYGRKR). Residues 82 to 102 (ILIGSVALFGLFSLATAIAWD) traverse the membrane as a helical segment. At 103–105 (FPS) the chain is on the periplasmic side. A helical membrane pass occupies residues 106-126 (LVFARLMTGVGLGAALPNLIA). Residues 127–142 (LTSEAAGPRFRGTAVS) are Cytoplasmic-facing. A helical membrane pass occupies residues 143 to 163 (LMYCGVPIGAALAATLGFAGA). Position 164 (Asn-164) is a topological domain, periplasmic. A helical membrane pass occupies residues 165–185 (LAWQTVFWVGGVVPLILVPLL). The Cytoplasmic segment spans residues 186 to 217 (MRWLPESAVFAGEKQSAPPLRALFAPETATAT). Residues 218–238 (LLLWLCYFFTLLVVYMLINWL) form a helical membrane-spanning segment. Topologically, residues 239-253 (PLLLVEQGFQPSQAA) are periplasmic. The chain crosses the membrane as a helical span at residues 254–274 (GVMFALQMGAASGTLMLGALM). Topologically, residues 275-279 (DKLRP) are cytoplasmic. A helical membrane pass occupies residues 280 to 300 (VTMSLLIYSGMLASLLALGTV). Topologically, residues 301–306 (SSFNGM) are periplasmic. A helical transmembrane segment spans residues 307–327 (LLAGFVAGLFATGGQSVLYAL). The Cytoplasmic portion of the chain corresponds to 328–339 (APLFYSSQIRAT). A helical membrane pass occupies residues 340–360 (GVGTAVAVGRLGAMSGPLLAG). Over 361–369 (KMLALGTGT) the chain is Periplasmic. The chain crosses the membrane as a helical span at residues 370–390 (VGVMAASAPGILVAGLAVFIL). The Cytoplasmic portion of the chain corresponds to 391–403 (MSRRSRIQPCADA).

It belongs to the major facilitator superfamily. Aromatic acid:H(+) symporter (AAHS) (TC 2.A.1.15) family.

The protein resides in the cell inner membrane. The enzyme catalyses 3-(3-hydroxyphenyl)propanoate(in) + H(+)(in) = 3-(3-hydroxyphenyl)propanoate(out) + H(+)(out). Inhibited by carbonyl cyanide m-chlorophenylhydrazone (CCCP), which dissipates the proton motive force. In terms of biological role, uptake of 3-(3-hydroxyphenyl)propionate (3HPP) across the cytoplasmic membrane. Transport is driven by the proton motive force. Does not transport benzoate, 3-hydroxybenzoate or gentisate. This Escherichia coli (strain K12) protein is 3-(3-hydroxy-phenyl)propionate transporter.